The sequence spans 1806 residues: Non-reducing polyketide synthase pks12 (1806 aa).

Positions Thr-30–His-191 constitute a Starter acyltransferase (SAT) domain. Positions Glu-330–Glu-755 constitute a Ketosynthase family 3 (KS3) domain. Catalysis depends on for beta-ketoacyl synthase activity residues Cys-504, His-639, and His-678. The tract at residues Leu-860–Gly-1156 is malonyl-CoA:ACP transacylase (MAT) domain. Residues Phe-862–His-1147 enclose the Malonyl-CoA:ACP transacylase (MAT) domain. Ser-947 serves as the catalytic For acyl/malonyl transferase activity. The tract at residues Pro-1249 to Asp-1383 is N-terminal hotdog fold. The 310-residue stretch at Pro-1249–Glu-1558 folds into the PKS/mFAS DH domain. The tract at residues Pro-1249 to Glu-1558 is product template (PT) domain. His-1288 functions as the Proton acceptor; for dehydratase activity in the catalytic mechanism. Positions Ser-1404–Glu-1558 are C-terminal hotdog fold. The active-site Proton donor; for dehydratase activity is Asp-1468. Residues Gln-1727–Ser-1804 form the Carrier domain. An O-(pantetheine 4'-phosphoryl)serine modification is found at Ser-1764.

Pantetheine 4'-phosphate is required as a cofactor.

It functions in the pathway secondary metabolite biosynthesis. Non-reducing polyketide synthase; part of the gene cluster that mediates the biosynthesis of mitorubrinol and mitorubrinic acid, two virulence factors that improve T.marneffei intracellular survival in macrophages. The two polyketide synthases pks12 and pks11 are probably responsible for sequential use in the biosynthesis of mitorubrinol and mitorubrinic acid. The first part of the biosynthesis is probably catalyzed by pks12, which synthesized orsellinic acid. This tetraketide is then used as a starter unit for pks11, which possesses a SAT domain, in the second part of the biosynthesis. Pks11, contains a methyltransferase domain, also served that methylates the products, using a methyl group from S-adenosylmethionine. The sequence is that of Non-reducing polyketide synthase pks12 from Talaromyces marneffei (Penicillium marneffei).